The following is a 1037-amino-acid chain: Receptor kinase-like protein Xa21 (1037 aa).

The N-terminal stretch at 1–24 (MARSPTSVMISSLLLLLLIGPASS) is a signal peptide. Residues 25–665 (DDAAAAAAAR…LLENRKHFPV (641 aa)) are Extracellular-facing. Asn66, Asn101, and Asn112 each carry an N-linked (GlcNAc...) asparagine glycan. LRR repeat units follow at residues 89-112 (PHRV…SLGN), 113-137 (LSFL…LSRL), 138-161 (SRLQ…IGAC), 163-185 (KLTS…IGAS), 187-210 (KHLS…LGNL), 211-234 (TSLQ…LGQL), 236-259 (SSLL…IWNL), 260-283 (SSLR…AFKT), 285-308 (HLLE…VANA), 310-331 (HLTQ…GFGR), and 333-355 (RNLT…DWGF). The N-linked (GlcNAc...) asparagine glycan is linked to Asn209. N-linked (GlcNAc...) asparagine glycosylation is found at Asn247 and Asn258. Asn307 is a glycosylation site (N-linked (GlcNAc...) asparagine). N-linked (GlcNAc...) asparagine glycans are attached at residues Asn334, Asn361, and Asn385. LRR repeat units follow at residues 362-385 (CSKL…SFSN), 387-411 (STSL…IGNL), 412-435 (IGLQ…LGRL), 437-459 (NLGI…IGNL), 460-482 (TELN…TLSN), 483-507 (LTNL…LFNI), 509-532 (TLSI…IGHL), 533-556 (KNLV…LGDC), 557-580 (QLLR…LGQL), 581-604 (KGLE…LADI), and 606-629 (MLHS…AFAD). N-linked (GlcNAc...) asparagine glycans are attached at residues Asn447, Asn458, Asn482, Asn495, and Asn515. Residues Asn592 and Asn611 are each glycosylated (N-linked (GlcNAc...) asparagine). Residues 666–686 (LPISVSLVAALAILSSLYLLI) form a helical membrane-spanning segment. Residues 687–1037 (TWHKRTKKGA…PVCEGASLEF (351 aa)) are Cytoplasmic-facing. The Nuclear localization signal signature appears at 689 to 694 (HKRTKK). Ser698 bears the Phosphoserine mark. Residue Thr700 is modified to Phosphothreonine. Ser701 carries the phosphoserine modification. Position 717 is a phosphothreonine (Thr717). Positions 720-1019 (FAPTNLLGSG…GDIIDELNAI (300 aa)) constitute a Protein kinase domain. Residues 726 to 734 (LGSGSFGSV) and Lys748 contribute to the ATP site. Asp854 functions as the Proton acceptor in the catalytic mechanism.

This sequence belongs to the protein kinase superfamily. Ser/Thr protein kinase family. As to quaternary structure, interacts with WRKY62/XB10 in the nucleus. Interacts with SERK2. It depends on Mn(2+) as a cofactor. The cofactor is Mg(2+). Post-translationally, undergoes protein cleavage upon X.oryzae pv. oryzae protein Ax21 detection, thus releasing the processed protein kinase Xa21 chain. In terms of processing, autophosphorylated on serine and threonine residues; these phosphorylation prevents proteolytic degradation.

Its subcellular location is the cell membrane. It localises to the endoplasmic reticulum membrane. It is found in the nucleus. The catalysed reaction is L-seryl-[protein] + ATP = O-phospho-L-seryl-[protein] + ADP + H(+). The enzyme catalyses L-threonyl-[protein] + ATP = O-phospho-L-threonyl-[protein] + ADP + H(+). In terms of biological role, receptor kinase that detects X.oryzae pv. oryzae protein Ax21 to promote innate immunity. Following X.oryzae pv. oryzae protein Ax21 detection, undergoes cleavage, releasing the processed protein kinase Xa21 chain. Its function is as follows. The processed protein kinase Xa21 chain released by protein cleavage after X.oryzae pv. oryzae protein Ax21 detection translocates into the nucleus where it can bind and regulate WRKY62, a transcription factor. Confers resistance to the bacterial pathogen X.oryzae pv. oryzae (Xoo). In Oryza sativa subsp. japonica (Rice), this protein is Receptor kinase-like protein Xa21.